We begin with the raw amino-acid sequence, 263 residues long: HTH-type transcriptional repressor NanR (263 aa).

Residues methionine 1 to arginine 25 form a disordered region. One can recognise an HTH gntR-type domain in the interval lysine 30 to proline 98. A DNA-binding region (H-T-H motif) is located at residues glutamate 58–alanine 77.

It belongs to the NanR family.

Its function is as follows. Transcriptional repressor that controls expression of the genes required for the catabolism of sialic acids. In Salmonella schwarzengrund (strain CVM19633), this protein is HTH-type transcriptional repressor NanR.